The following is a 299-amino-acid chain: Pyridoxal 5'-phosphate synthase subunit PdxS (299 aa).

Asp24 contributes to the D-ribose 5-phosphate binding site. The active-site Schiff-base intermediate with D-ribose 5-phosphate is Lys81. Gly153 lines the D-ribose 5-phosphate pocket. Residue Arg165 participates in D-glyceraldehyde 3-phosphate binding. D-ribose 5-phosphate is bound by residues Gly219 and 240 to 241 (GS).

It belongs to the PdxS/SNZ family. In terms of assembly, in the presence of PdxT, forms a dodecamer of heterodimers.

It catalyses the reaction aldehydo-D-ribose 5-phosphate + D-glyceraldehyde 3-phosphate + L-glutamine = pyridoxal 5'-phosphate + L-glutamate + phosphate + 3 H2O + H(+). The protein operates within cofactor biosynthesis; pyridoxal 5'-phosphate biosynthesis. Its function is as follows. Catalyzes the formation of pyridoxal 5'-phosphate from ribose 5-phosphate (RBP), glyceraldehyde 3-phosphate (G3P) and ammonia. The ammonia is provided by the PdxT subunit. Can also use ribulose 5-phosphate and dihydroxyacetone phosphate as substrates, resulting from enzyme-catalyzed isomerization of RBP and G3P, respectively. The polypeptide is Pyridoxal 5'-phosphate synthase subunit PdxS (Methanococcus vannielii (strain ATCC 35089 / DSM 1224 / JCM 13029 / OCM 148 / SB)).